A 181-amino-acid chain; its full sequence is Endoribonuclease YbeY (181 aa).

Residues His-140, His-144, and His-150 each contribute to the Zn(2+) site.

Belongs to the endoribonuclease YbeY family. Zn(2+) is required as a cofactor.

It is found in the cytoplasm. Functionally, single strand-specific metallo-endoribonuclease involved in late-stage 70S ribosome quality control and in maturation of the 3' terminus of the 16S rRNA. This chain is Endoribonuclease YbeY, found in Dinoroseobacter shibae (strain DSM 16493 / NCIMB 14021 / DFL 12).